Consider the following 912-residue polypeptide: Probable dipeptidyl-aminopeptidase B (912 aa).

A disordered region spans residues 1–74; sequence MSSALSPEGD…GPFLGPGASL (74 aa). At 1–85 the chain is on the cytoplasmic side; the sequence is MSSALSPEGD…REPMDRGLRR (85 aa). Residues 16–27 are compositionally biased toward low complexity; that stretch reads DSLSSVSTTSLV. A compositionally biased stretch (basic and acidic residues) spans 30 to 50; the sequence is RIQEKTEMDADNDKEKDPRAL. Positions 51-63 are enriched in acidic residues; sequence DDEDPLRDEDDLE. The helical; Signal-anchor for type II membrane protein transmembrane segment at 86–106 threads the bilayer; the sequence is ILIIVAVVFIGGWLAGLGIFI. Residues 107–912 lie on the Vacuolar side of the membrane; that stretch reads ASGSYHHESD…KRHMVPQALV (806 aa). Asn-344 is a glycosylation site (N-linked (GlcNAc...) asparagine). The active-site Charge relay system is the Ser-749. Asn-808 carries N-linked (GlcNAc...) asparagine glycosylation. Catalysis depends on charge relay system residues Asp-826 and His-859. A disordered region spans residues 892-912; the sequence is PQPQKDPVEKEKRHMVPQALV.

Belongs to the peptidase S9B family.

Its subcellular location is the vacuole membrane. It carries out the reaction Release of an N-terminal dipeptide, Xaa-Yaa-|-Zaa-, from a polypeptide, preferentially when Yaa is Pro, provided Zaa is neither Pro nor hydroxyproline.. Type IV dipeptidyl-peptidase which removes N-terminal dipeptides sequentially from polypeptides having unsubstituted N-termini provided that the penultimate residue is proline. This chain is Probable dipeptidyl-aminopeptidase B (DAPB), found in Fusarium vanettenii (strain ATCC MYA-4622 / CBS 123669 / FGSC 9596 / NRRL 45880 / 77-13-4) (Fusarium solani subsp. pisi).